The primary structure comprises 72 residues: DNA-directed RNA polymerase subunit epsilon (72 aa).

This sequence belongs to the RNA polymerase subunit epsilon family. As to quaternary structure, RNAP is composed of a core of 2 alpha, a beta and a beta' subunit. The core is associated with a delta subunit, and at least one of epsilon or omega. When a sigma factor is associated with the core the holoenzyme is formed, which can initiate transcription.

It carries out the reaction RNA(n) + a ribonucleoside 5'-triphosphate = RNA(n+1) + diphosphate. Its function is as follows. A non-essential component of RNA polymerase (RNAP). This chain is DNA-directed RNA polymerase subunit epsilon, found in Staphylococcus aureus (strain JH1).